Consider the following 792-residue polypeptide: DNA ligase (792 aa).

NAD(+) contacts are provided by residues 42-46 (DAEYD), 91-92 (SL), and Glu-124. Catalysis depends on Lys-126, which acts as the N6-AMP-lysine intermediate. NAD(+)-binding residues include Arg-147, Glu-189, Lys-306, and Lys-330. Zn(2+) is bound by residues Cys-424, Cys-426, Cys-448, and Cys-454. In terms of domain architecture, BRCT spans 714–792 (KTDTAVAGKT…EDEWLAMVGG (79 aa)).

It belongs to the NAD-dependent DNA ligase family. LigA subfamily. Mg(2+) serves as cofactor. The cofactor is Mn(2+).

It catalyses the reaction NAD(+) + (deoxyribonucleotide)n-3'-hydroxyl + 5'-phospho-(deoxyribonucleotide)m = (deoxyribonucleotide)n+m + AMP + beta-nicotinamide D-nucleotide.. DNA ligase that catalyzes the formation of phosphodiester linkages between 5'-phosphoryl and 3'-hydroxyl groups in double-stranded DNA using NAD as a coenzyme and as the energy source for the reaction. It is essential for DNA replication and repair of damaged DNA. This chain is DNA ligase, found in Caulobacter sp. (strain K31).